The sequence spans 345 residues: Phosphoribosylformylglycinamidine cyclo-ligase (345 aa).

This sequence belongs to the AIR synthase family.

The protein localises to the cytoplasm. It catalyses the reaction 2-formamido-N(1)-(5-O-phospho-beta-D-ribosyl)acetamidine + ATP = 5-amino-1-(5-phospho-beta-D-ribosyl)imidazole + ADP + phosphate + H(+). The protein operates within purine metabolism; IMP biosynthesis via de novo pathway; 5-amino-1-(5-phospho-D-ribosyl)imidazole from N(2)-formyl-N(1)-(5-phospho-D-ribosyl)glycinamide: step 2/2. The chain is Phosphoribosylformylglycinamidine cyclo-ligase from Aeromonas hydrophila subsp. hydrophila (strain ATCC 7966 / DSM 30187 / BCRC 13018 / CCUG 14551 / JCM 1027 / KCTC 2358 / NCIMB 9240 / NCTC 8049).